Reading from the N-terminus, the 469-residue chain is Zinc transporter SLC39A7 (469 aa).

Residues 10–30 form a helical membrane-spanning segment; it reads WVAVGLLTWATLGLLVAELGG. 2 stretches are compositionally biased toward basic and acidic residues: residues 42-56 and 66-114; these read FHGH…DFHH and HTHE…EHSR. The disordered stretch occupies residues 42 to 121; sequence FHGHSHRHSH…HSRGGYGESG (80 aa). The residue at position 66 (histidine 66) is a Pros-methylhistidine. A run of 3 helical transmembrane segments spans residues 138 to 158, 169 to 189, and 214 to 234; these read ALGA…LIPV, LQIL…LHLI, and GPIL…LVVE. Residues 242–263 show a composition bias toward basic residues; that stretch reads GGHGHSHGHGHAHSHTHGSHGH. The segment at 242–310 is disordered; sequence GGHGHSHGHG…VRPQNAEEEK (69 aa). The span at 264 to 285 shows a compositional bias: basic and acidic residues; sequence GRQECSTKEKQSSEEEEKETRG. A phosphoserine mark is found at serine 275 and serine 276. The next 3 membrane-spanning stretches (helical) occupy residues 386-406, 410-430, and 448-468; these read LTAV…GGAV, IAGG…FIYV, and SLLE…IAHL.

It belongs to the ZIP transporter (TC 2.A.5) family. KE4/Catsup subfamily. As to quaternary structure, homodimer. Post-translationally, methylation at some His residue by METTL9 leads to reduced zinc-binding. In terms of processing, rapidly phosphorylated by CK2 following Zn(2+) treatment. This phosphorylation is required for efficient cytosolic Zn(2+) release.

The protein localises to the endoplasmic reticulum membrane. It is found in the golgi apparatus. It localises to the cis-Golgi network membrane. It catalyses the reaction Zn(2+)(in) = Zn(2+)(out). Functionally, transports Zn(2+) from the endoplasmic reticulum (ER)/Golgi apparatus to the cytosol, playing an essential role in the regulation of cytosolic zinc levels. Acts as a gatekeeper of zinc release from intracellular stores, requiring post-translational activation by phosphorylation, resulting in activation of multiple downstream pathways leading to cell growth and proliferation. Has an essential role in B cell development and is required for proper B cell receptor signaling. Plays an important role in maintaining intestinal epithelial homeostasis and skin dermis development by regulating ER function. Controls cell signaling pathways involved in glucose metabolism in skeletal muscle. Has a protective role against ER stress in different biological contexts. Mediates Zn(2+)-induced ferroptosis. This Pongo abelii (Sumatran orangutan) protein is Zinc transporter SLC39A7.